The sequence spans 313 residues: 4-diphosphocytidyl-2-C-methyl-D-erythritol kinase (313 aa).

Lys-11 is a catalytic residue. 99–109 (PVAAGLAGGST) serves as a coordination point for ATP. Asp-141 is an active-site residue.

It belongs to the GHMP kinase family. IspE subfamily.

It carries out the reaction 4-CDP-2-C-methyl-D-erythritol + ATP = 4-CDP-2-C-methyl-D-erythritol 2-phosphate + ADP + H(+). Its pathway is isoprenoid biosynthesis; isopentenyl diphosphate biosynthesis via DXP pathway; isopentenyl diphosphate from 1-deoxy-D-xylulose 5-phosphate: step 3/6. Catalyzes the phosphorylation of the position 2 hydroxy group of 4-diphosphocytidyl-2C-methyl-D-erythritol. This Microcystis aeruginosa (strain NIES-843 / IAM M-2473) protein is 4-diphosphocytidyl-2-C-methyl-D-erythritol kinase.